The primary structure comprises 277 residues: 4-hydroxybenzoate octaprenyltransferase (277 aa).

Transmembrane regions (helical) follow at residues 24 to 44 (FAAA…LGVI), 81 to 101 (VEAK…DLSL), 102 to 122 (NQYA…YPFM), 129 to 149 (PQVV…GAVI), 152 to 172 (LPLT…AYDT), 201 to 221 (IIAL…WLSE), 224 to 244 (IGYF…CWLT), and 255 to 275 (AFLN…VGIY).

The protein belongs to the UbiA prenyltransferase family. Mg(2+) is required as a cofactor.

Its subcellular location is the cell inner membrane. The enzyme catalyses all-trans-octaprenyl diphosphate + 4-hydroxybenzoate = 4-hydroxy-3-(all-trans-octaprenyl)benzoate + diphosphate. The protein operates within cofactor biosynthesis; ubiquinone biosynthesis. Catalyzes the prenylation of para-hydroxybenzoate (PHB) with an all-trans polyprenyl group. Mediates the second step in the final reaction sequence of ubiquinone-8 (UQ-8) biosynthesis, which is the condensation of the polyisoprenoid side chain with PHB, generating the first membrane-bound Q intermediate 3-octaprenyl-4-hydroxybenzoate. The chain is 4-hydroxybenzoate octaprenyltransferase from Haemophilus ducreyi (strain 35000HP / ATCC 700724).